The primary structure comprises 439 residues: ATP-dependent RNA helicase RhlB (439 aa).

The Q motif motif lies at 9 to 37 (QKFADLPLHPEVKQALAENGFEFCTPIQA). One can recognise a Helicase ATP-binding domain in the interval 40–219 (LPVLLQSKDI…YDHMNDPVKV (180 aa)). An ATP-binding site is contributed by 53–60 (AQTGTGKT). The DEAD box signature appears at 165–168 (DEAD). Residues 243–390 (KIRLLLTLIE…VSNYDRDALL (148 aa)) form the Helicase C-terminal domain. The tract at residues 395–439 (PPVKIHRKHPAGARNLRERSGAGRPQGAHRSGGRPPRHDRTRRQP) is disordered. The segment covering 425-439 (SGGRPPRHDRTRRQP) has biased composition (basic residues).

It belongs to the DEAD box helicase family. RhlB subfamily. As to quaternary structure, component of the RNA degradosome, which is a multiprotein complex involved in RNA processing and mRNA degradation.

The protein resides in the cytoplasm. The catalysed reaction is ATP + H2O = ADP + phosphate + H(+). Functionally, DEAD-box RNA helicase involved in RNA degradation. Has RNA-dependent ATPase activity and unwinds double-stranded RNA. This Shewanella sp. (strain MR-4) protein is ATP-dependent RNA helicase RhlB.